A 333-amino-acid polypeptide reads, in one-letter code: Foldase protein PrsA (333 aa).

The signal sequence occupies residues 1–22 (MKKSTKLLAGIVTLASAMTLAA). Cys23 is lipidated: N-palmitoyl cysteine. Cys23 is lipidated: S-diacylglycerol cysteine. The region spanning 145–240 (TPEMTTQVTT…NKFYIVKVTK (96 aa)) is the PpiC domain. A disordered region spans residues 301–333 (DKKASKANTSKSDQKSSSDSSKDSQSSKSKSEK). Residues 312 to 322 (SDQKSSSDSSK) show a composition bias toward basic and acidic residues. The segment covering 323 to 333 (DSQSSKSKSEK) has biased composition (low complexity).

The protein belongs to the PrsA family.

The protein resides in the cell membrane. It carries out the reaction [protein]-peptidylproline (omega=180) = [protein]-peptidylproline (omega=0). Functionally, plays a major role in protein secretion by helping the post-translocational extracellular folding of several secreted proteins. The polypeptide is Foldase protein PrsA (Streptococcus equi subsp. equi (strain 4047)).